The chain runs to 416 residues: Squalene synthase (416 aa).

NADP(+) is bound by residues Arg52 and Arg77. Mg(2+) contacts are provided by Asp80, Glu83, and Asp84. NADP(+) is bound at residue Arg218. The chain crosses the membrane as a helical span at residues 284–304 (SVFNFCAIPQVMAIATLAACY). NADP(+) contacts are provided by Lys315 and Arg317. Residues 384 to 404 (PIYLSFIMLLAALSWQYLSTL) traverse the membrane as a helical segment.

Belongs to the phytoene/squalene synthase family. Requires Mg(2+) as cofactor.

The protein localises to the endoplasmic reticulum membrane. It carries out the reaction 2 (2E,6E)-farnesyl diphosphate + NADPH + H(+) = squalene + 2 diphosphate + NADP(+). The catalysed reaction is 2 (2E,6E)-farnesyl diphosphate + NADH + H(+) = squalene + 2 diphosphate + NAD(+). The enzyme catalyses presqualene diphosphate + NADH + H(+) = squalene + diphosphate + NAD(+). It catalyses the reaction presqualene diphosphate + NADPH + H(+) = squalene + diphosphate + NADP(+). It carries out the reaction 2 (2E,6E)-farnesyl diphosphate = presqualene diphosphate + diphosphate. It participates in terpene metabolism; lanosterol biosynthesis; lanosterol from farnesyl diphosphate: step 1/3. Catalyzes the condensation of 2 farnesyl pyrophosphate (FPP) moieties to form squalene. Proceeds in two distinct steps. In the first half-reaction, two molecules of FPP react to form the stable presqualene diphosphate intermediate (PSQPP), with concomitant release of a proton and a molecule of inorganic diphosphate. In the second half-reaction, PSQPP undergoes heterolysis, isomerization, and reduction with NADPH or NADH to form squalene. It is the first committed enzyme of the sterol biosynthesis pathway. The protein is Squalene synthase (Fdft1) of Mus musculus (Mouse).